The chain runs to 264 residues: Triosephosphate isomerase (264 aa).

13 to 15 (NWK) is a binding site for substrate. The active-site Electrophile is His106. Glu179 (proton acceptor) is an active-site residue. Substrate contacts are provided by residues Gly185, Ser223, and 244 to 245 (GG).

Belongs to the triosephosphate isomerase family. In terms of assembly, homodimer.

It is found in the cytoplasm. The catalysed reaction is D-glyceraldehyde 3-phosphate = dihydroxyacetone phosphate. It functions in the pathway carbohydrate biosynthesis; gluconeogenesis. The protein operates within carbohydrate degradation; glycolysis; D-glyceraldehyde 3-phosphate from glycerone phosphate: step 1/1. Functionally, involved in the gluconeogenesis. Catalyzes stereospecifically the conversion of dihydroxyacetone phosphate (DHAP) to D-glyceraldehyde-3-phosphate (G3P). The sequence is that of Triosephosphate isomerase from Acinetobacter baumannii (strain AB0057).